Here is a 413-residue protein sequence, read N- to C-terminus: Arginine biosynthesis bifunctional protein ArgJ (413 aa).

Substrate-binding residues include Thr158, Lys184, Thr195, Glu285, Asn408, and Ser413. Thr195 acts as the Nucleophile in catalysis.

This sequence belongs to the ArgJ family. As to quaternary structure, heterotetramer of two alpha and two beta chains.

It localises to the cytoplasm. The catalysed reaction is N(2)-acetyl-L-ornithine + L-glutamate = N-acetyl-L-glutamate + L-ornithine. The enzyme catalyses L-glutamate + acetyl-CoA = N-acetyl-L-glutamate + CoA + H(+). It participates in amino-acid biosynthesis; L-arginine biosynthesis; L-ornithine and N-acetyl-L-glutamate from L-glutamate and N(2)-acetyl-L-ornithine (cyclic): step 1/1. It functions in the pathway amino-acid biosynthesis; L-arginine biosynthesis; N(2)-acetyl-L-ornithine from L-glutamate: step 1/4. Catalyzes two activities which are involved in the cyclic version of arginine biosynthesis: the synthesis of N-acetylglutamate from glutamate and acetyl-CoA as the acetyl donor, and of ornithine by transacetylation between N(2)-acetylornithine and glutamate. The protein is Arginine biosynthesis bifunctional protein ArgJ of Bradyrhizobium diazoefficiens (strain JCM 10833 / BCRC 13528 / IAM 13628 / NBRC 14792 / USDA 110).